The following is a 552-amino-acid chain: Steroid transmembrane transporter SLC22A24 (552 aa).

The next 12 membrane-spanning stretches (helical) occupy residues phenylalanine 16 to leucine 36, leucine 144 to glycine 164, isoleucine 175 to valine 197, isoleucine 201 to leucine 220, isoleucine 232 to alanine 252, isoleucine 255 to leucine 275, isoleucine 349 to leucine 369, leucine 371 to isoleucine 391, isoleucine 407 to serine 427, valine 435 to histidine 455, valine 474 to proline 494, and leucine 496 to proline 516.

Belongs to the major facilitator (TC 2.A.1) superfamily. Organic cation transporter (TC 2.A.1.19) family.

It localises to the cell membrane. The catalysed reaction is estrone 3-sulfate(out) + glutarate(in) = estrone 3-sulfate(in) + glutarate(out). It catalyses the reaction 17beta-estradiol 17-O-(beta-D-glucuronate)(out) + glutarate(in) = 17beta-estradiol 17-O-(beta-D-glucuronate)(in) + glutarate(out). The enzyme catalyses taurocholate(out) + glutarate(in) = taurocholate(in) + glutarate(out). It carries out the reaction 5alpha-androstane-3alpha,17beta-diol 3-O-(beta-D-glucuronate)(out) + glutarate(in) = 5alpha-androstane-3alpha,17beta-diol 3-O-(beta-D-glucuronate)(in) + glutarate(out). The catalysed reaction is glycocholate(out) + glutarate(in) = glycocholate(in) + glutarate(out). It catalyses the reaction dehydroepiandrosterone 3-sulfate(out) + glutarate(in) = dehydroepiandrosterone 3-sulfate(in) + glutarate(out). The enzyme catalyses glutarate(in) + succinate(out) = glutarate(out) + succinate(in). Renal transmembrane organic anion/dicarboxylate exchanger that participates in the reabsorption of conjugated steroids, as well as bile acids, driven by an outward gradient of dicarboxylates such as glutarate or succinate. Transports androstanediol glucuronide (5alpha-androstane-3alpha,17beta-diol 3-O-(beta-D-glucuronate)), estrone 3-sulfate, and estradiol-17-glucuronide (17beta-estradiol 17-O-(beta-D-glucuronate)), and taurocholate. The chain is Steroid transmembrane transporter SLC22A24 from Oryctolagus cuniculus (Rabbit).